The primary structure comprises 86 residues: Large ribosomal subunit protein bL31 (86 aa).

Positions 65 to 86 are disordered; it reads YGMGSANSATSKEQKEEKDSNK. Positions 76 to 86 are enriched in basic and acidic residues; sequence KEQKEEKDSNK.

The protein belongs to the bacterial ribosomal protein bL31 family. Type A subfamily. As to quaternary structure, part of the 50S ribosomal subunit.

Functionally, binds the 23S rRNA. The protein is Large ribosomal subunit protein bL31 of Prochlorococcus marinus (strain MIT 9312).